Reading from the N-terminus, the 241-residue chain is Small ribosomal subunit protein uS3 (241 aa).

One can recognise a KH type-2 domain in the interval 22–91; the sequence is VDEYLAYKFH…NPQVTVVKVE (70 aa). A disordered region spans residues 218-241; sequence EMQQTQPEAPTLEETVEQSGGETQ.

Belongs to the universal ribosomal protein uS3 family. In terms of assembly, part of the 30S ribosomal subunit.

Its function is as follows. Binds the lower part of the 30S subunit head. The protein is Small ribosomal subunit protein uS3 of Ignicoccus hospitalis (strain KIN4/I / DSM 18386 / JCM 14125).